A 968-amino-acid chain; its full sequence is Leucine--tRNA ligase (968 aa).

The span at 1–13 shows a compositional bias: polar residues; it reads MTETPTGTQSSRE. The tract at residues 1–22 is disordered; the sequence is MTETPTGTQSSRETAADDTPRH. The 'HIGH' region signature appears at 75–86; it reads PYPSGEGLHVGH. Positions 741-745 match the 'KMSKS' region motif; that stretch reads KIGKS. Position 744 (Lys-744) interacts with ATP.

It belongs to the class-I aminoacyl-tRNA synthetase family.

The protein localises to the cytoplasm. It catalyses the reaction tRNA(Leu) + L-leucine + ATP = L-leucyl-tRNA(Leu) + AMP + diphosphate. In Mycolicibacterium vanbaalenii (strain DSM 7251 / JCM 13017 / BCRC 16820 / KCTC 9966 / NRRL B-24157 / PYR-1) (Mycobacterium vanbaalenii), this protein is Leucine--tRNA ligase.